A 657-amino-acid chain; its full sequence is MKKLITADDITAIVSVTDPQYAPDGTRAAYVKSQVNQEKDSYTSNIWIYETKTGGSVPWTHGEKRSTDPRWSPDGRTLAFISDREGDAAQLYIMSTEGGEARKLTDIPYGVSKPLWSPDGESILVTVSLGEGESIDDREKTEQDSYEPVEVQGLSYKRDGKGLTRGAYAQLVLVSVKSGEMKELTSHKADHGDPAFSPDGKWLVFSANLTETDDASKPHDVYIMSLESGDLKQVTPHRGSFGSSSFSPDGRYLALLGNEKEYKNATLSKAWLYDIEQGRLTCLTEMLDVHLADALIGDSLIGGAEQRPIWTKDSQGFYVIGTDQGSTGIYYISIEGLVYPIRLEKEYINSFSLSPDEQHFIASVTKPDRPSELYSIPLGQEEKQLTGANDKFVREHTISIPEEIQYATEDGVMVNGWLMRPAQMEGETTYPLILNIHGGPHMMYGHTYFHEFQVLAAKGYAVVYINPRGSHGYGQEFVNAVRGDYGGKDYDDVMQAVDEAIKRDPHIDPKRLGVTGGSYGGFMTNWIVGQTNRFKAAVTQRSISNWISFHGVSDIGYFFTDWQLEHDMFEDTEKLWDRSPLKYAANVETPLLILHGERDDRCPIEQAEQLFIALKKMGKETKLVRFPNASHNLSRTGHPRQRIKRLNYISSWFDQHL.

Active-site charge relay system residues include serine 518 and histidine 631.

Belongs to the peptidase S9C family.

This is an uncharacterized protein from Bacillus subtilis (strain 168).